The following is a 353-amino-acid chain: Photosystem II D2 protein (353 aa).

Thr-2 is modified (N-acetylthreonine). Thr-2 is modified (phosphothreonine). A helical membrane pass occupies residues 41-61 (CAYFALGGWFTGTTFVTSWYT). His-118 contributes to the chlorophyll a binding site. The chain crosses the membrane as a helical span at residues 125–141 (GFMLRQFELARSVQLRP). Residues Gln-130 and Asn-143 each contribute to the pheophytin a site. Residues 153-166 (VFISVFFIYPLGQS) form a helical membrane-spanning segment. His-198 lines the chlorophyll a pocket. The helical transmembrane segment at 208-228 (AALLCAIHGATVENTLFEDGD) threads the bilayer. Positions 215 and 262 each coordinate a plastoquinone. Residue His-215 participates in Fe cation binding. Residue His-269 participates in Fe cation binding. Residues 279–295 (GLWMSALGVVGLALNLR) traverse the membrane as a helical segment.

This sequence belongs to the reaction center PufL/M/PsbA/D family. As to quaternary structure, PSII is composed of 1 copy each of membrane proteins PsbA, PsbB, PsbC, PsbD, PsbE, PsbF, PsbH, PsbI, PsbJ, PsbK, PsbL, PsbM, PsbT, PsbX, PsbY, PsbZ, Psb30/Ycf12, at least 3 peripheral proteins of the oxygen-evolving complex and a large number of cofactors. It forms dimeric complexes. Requires The D1/D2 heterodimer binds P680, chlorophylls that are the primary electron donor of PSII, and subsequent electron acceptors. It shares a non-heme iron and each subunit binds pheophytin, quinone, additional chlorophylls, carotenoids and lipids. There is also a Cl(-1) ion associated with D1 and D2, which is required for oxygen evolution. The PSII complex binds additional chlorophylls, carotenoids and specific lipids. as cofactor.

The protein localises to the plastid membrane. It catalyses the reaction 2 a plastoquinone + 4 hnu + 2 H2O = 2 a plastoquinol + O2. In terms of biological role, photosystem II (PSII) is a light-driven water:plastoquinone oxidoreductase that uses light energy to abstract electrons from H(2)O, generating O(2) and a proton gradient subsequently used for ATP formation. It consists of a core antenna complex that captures photons, and an electron transfer chain that converts photonic excitation into a charge separation. The D1/D2 (PsbA/PsbD) reaction center heterodimer binds P680, the primary electron donor of PSII as well as several subsequent electron acceptors. D2 is needed for assembly of a stable PSII complex. The sequence is that of Photosystem II D2 protein from Cuscuta reflexa (Southern Asian dodder).